Here is a 198-residue protein sequence, read N- to C-terminus: HTH-type transcriptional regulator BetI (198 aa).

The HTH tetR-type domain occupies 8–68 (PLRRRELIDA…ATMRHLLREL (61 aa)). The H-T-H motif DNA-binding region spans 31–50 (TVAQIAHEAGVSPALAHHYF).

It participates in amine and polyamine biosynthesis; betaine biosynthesis via choline pathway [regulation]. Functionally, repressor involved in the biosynthesis of the osmoprotectant glycine betaine. It represses transcription of the choline transporter BetT and the genes of BetAB involved in the synthesis of glycine betaine. The protein is HTH-type transcriptional regulator BetI of Brucella melitensis biotype 2 (strain ATCC 23457).